The following is a 143-amino-acid chain: Anti-sigma F factor (143 aa).

The protein belongs to the anti-sigma-factor family.

The catalysed reaction is L-seryl-[protein] + ATP = O-phospho-L-seryl-[protein] + ADP + H(+). It catalyses the reaction L-threonyl-[protein] + ATP = O-phospho-L-threonyl-[protein] + ADP + H(+). In terms of biological role, binds to sigma F and blocks its ability to form an RNA polymerase holoenzyme (E-sigma F). Phosphorylates SpoIIAA on a serine residue. This phosphorylation may enable SpoIIAA to act as an anti-anti-sigma factor that counteracts SpoIIAB and thus releases sigma F from inhibition. The sequence is that of Anti-sigma F factor from Thermoanaerobacter pseudethanolicus (strain ATCC 33223 / 39E) (Clostridium thermohydrosulfuricum).